A 277-amino-acid polypeptide reads, in one-letter code: Shikimate dehydrogenase (NADP(+)) (277 aa).

Shikimate-binding positions include 15–17 and Thr62; that span reads SLS. The active-site Proton acceptor is the Lys66. Asn87 and Asp102 together coordinate shikimate. Residues 127-131, 151-156, and Ile219 contribute to the NADP(+) site; these read GAGGA and NRTRDK. Shikimate is bound at residue Tyr221. Gly242 is an NADP(+) binding site.

Belongs to the shikimate dehydrogenase family. As to quaternary structure, homodimer.

The enzyme catalyses shikimate + NADP(+) = 3-dehydroshikimate + NADPH + H(+). It participates in metabolic intermediate biosynthesis; chorismate biosynthesis; chorismate from D-erythrose 4-phosphate and phosphoenolpyruvate: step 4/7. In terms of biological role, involved in the biosynthesis of the chorismate, which leads to the biosynthesis of aromatic amino acids. Catalyzes the reversible NADPH linked reduction of 3-dehydroshikimate (DHSA) to yield shikimate (SA). This Bacillus mycoides (strain KBAB4) (Bacillus weihenstephanensis) protein is Shikimate dehydrogenase (NADP(+)).